The sequence spans 307 residues: Methionyl-tRNA formyltransferase (307 aa).

108–111 (SLLP) serves as a coordination point for (6S)-5,6,7,8-tetrahydrofolate.

This sequence belongs to the Fmt family.

It catalyses the reaction L-methionyl-tRNA(fMet) + (6R)-10-formyltetrahydrofolate = N-formyl-L-methionyl-tRNA(fMet) + (6S)-5,6,7,8-tetrahydrofolate + H(+). Attaches a formyl group to the free amino group of methionyl-tRNA(fMet). The formyl group appears to play a dual role in the initiator identity of N-formylmethionyl-tRNA by promoting its recognition by IF2 and preventing the misappropriation of this tRNA by the elongation apparatus. This chain is Methionyl-tRNA formyltransferase, found in Xanthomonas campestris pv. campestris (strain 8004).